A 192-amino-acid chain; its full sequence is Zinc finger CCHC domain-containing protein 10 (192 aa).

The segment at 43-60 (VRCQKCLEFGHWTYECTG) adopts a CCHC-type zinc-finger fold. Residues 89 to 192 (QSIGETNVER…DEPPKKKKKK (104 aa)) form a disordered region. Composition is skewed to low complexity over residues 109–136 (TSSS…SSSS) and 144–179 (SSSS…STDS).

This chain is Zinc finger CCHC domain-containing protein 10 (ZCCHC10), found in Homo sapiens (Human).